Consider the following 373-residue polypeptide: Flagellar P-ring protein (373 aa).

An N-terminal signal peptide occupies residues 1–26 (MKLFFRFLTLVAVLAMSLADVAPAWA).

The protein belongs to the FlgI family. As to quaternary structure, the basal body constitutes a major portion of the flagellar organelle and consists of four rings (L,P,S, and M) mounted on a central rod.

It localises to the periplasm. Its subcellular location is the bacterial flagellum basal body. Assembles around the rod to form the L-ring and probably protects the motor/basal body from shearing forces during rotation. This Rhizobium leguminosarum bv. trifolii (strain WSM2304) protein is Flagellar P-ring protein.